The sequence spans 323 residues: tRNA U34 carboxymethyltransferase (323 aa).

Carboxy-S-adenosyl-L-methionine contacts are provided by residues lysine 91, tryptophan 105, lysine 110, glycine 130, 180-181 (VE), methionine 196, tyrosine 200, and arginine 315.

It belongs to the class I-like SAM-binding methyltransferase superfamily. CmoB family. As to quaternary structure, homotetramer.

The enzyme catalyses carboxy-S-adenosyl-L-methionine + 5-hydroxyuridine(34) in tRNA = 5-carboxymethoxyuridine(34) in tRNA + S-adenosyl-L-homocysteine + H(+). Functionally, catalyzes carboxymethyl transfer from carboxy-S-adenosyl-L-methionine (Cx-SAM) to 5-hydroxyuridine (ho5U) to form 5-carboxymethoxyuridine (cmo5U) at position 34 in tRNAs. The sequence is that of tRNA U34 carboxymethyltransferase from Trichlorobacter lovleyi (strain ATCC BAA-1151 / DSM 17278 / SZ) (Geobacter lovleyi).